Here is a 365-residue protein sequence, read N- to C-terminus: Endophilin-B1 (365 aa).

Residue Met-1 is modified to N-acetylmethionine. A membrane-binding amphipathic helix region spans residues Met-1–Leu-30. Positions Met-1–Glu-37 are required for membrane binding. A BAR domain is found at Glu-27–Ser-261. Residue Thr-145 is modified to Phosphothreonine; by CDK5. Residues Tyr-155–Glu-186 are a coiled coil. One can recognise an SH3 domain in the interval Ser-305–Asn-365.

Belongs to the endophilin family. As to quaternary structure, homodimer, and heterodimer with SH3GLB2. Binds BAX; induction of apoptosis augments BAX binding. Binds DNM1, HTT, AMPH, BIN1 and ARFGAP1. Interacts with UVRAG; UVRAG bridges the interaction to BECN1 indicative for an association with the PI3K complex II (PI3KC3-C2). Isoform 3 interacts with PPP1CC; this interaction leads to the inhibition of phosphatase activity. Phosphorylated at Thr-145 by CDK5; this phosphorylation is required for autophagy induction in starved neurons and facilitates homodimerization. Isoform 1 is widely expressed. Isoform 2 is brain-specific. Isoform 3 is predominantly expressed in testis, but it is also detected in liver and, at much lower levels, in skin, stomach and ovary.

It localises to the cytoplasm. The protein localises to the golgi apparatus membrane. It is found in the mitochondrion outer membrane. The protein resides in the cytoplasmic vesicle. Its subcellular location is the autophagosome membrane. It localises to the midbody. Its function is as follows. May be required for normal outer mitochondrial membrane dynamics. Required for coatomer-mediated retrograde transport in certain cells. May recruit other proteins to membranes with high curvature. May promote membrane fusion. Involved in activation of caspase-dependent apoptosis by promoting BAX/BAK1 activation. Isoform 1 acts proapoptotic in fibroblasts. Involved in caspase-independent apoptosis during nutrition starvation and involved in the regulation of autophagy. Activates lipid kinase activity of PIK3C3 during autophagy probably by associating with the PI3K complex II (PI3KC3-C2). Associated with PI3KC3-C2 during autophagy may regulate the trafficking of ATG9A from the Golgi complex to the peripheral cytoplasm for the formation of autophagosomes by inducing Golgi membrane tubulation and fragmentation. Involved in regulation of degradative endocytic trafficking and cytokinesis, probably in the context of PI3KC3-C2. Isoform 2 acts antiapoptotic in neuronal cells; involved in maintenance of mitochondrial morphology and promotes neuronal viability. The protein is Endophilin-B1 (Sh3glb1) of Mus musculus (Mouse).